The sequence spans 354 residues: MKRPLDFLLAICLILLRSSTFADEHTVHWNSTNSMFRNRHPSIEVRLGDVVRFVCPDNEGRKNGEYLTVYEVSEFAMGECALESNSREVIKCGVDTNTEKIIRTHQLPIGESREPPKNVAQFIRSVNPIPNGKEYQPGQTYYYITTSSGKPGGIGQQMYGLCVSKNMRLSMKVLSSQPTPSPSSKPARSRTDARRQEDFITKSSAELMGGQEDEDSENDNAHLLPRDLEIATNPKFRRPSQFDQAAASAGVLDGQFLKVVQMAKEGKTGTFENDREVQKSAEKDAWDPINRHYVADLMNSAYKNANDRVVYQREPDFLIHEEDISTNSLGYSSSSSSSLPTFLIVFLIAVNLLF.

The N-terminal stretch at 1–22 (MKRPLDFLLAICLILLRSSTFA) is a signal peptide. One can recognise an Ephrin RBD domain in the interval 23–173 (DEHTVHWNST…SKNMRLSMKV (151 aa)). Asn-30 carries N-linked (GlcNAc...) asparagine glycosylation. 2 cysteine pairs are disulfide-bonded: Cys-55/Cys-92 and Cys-80/Cys-162. The interval 173 to 196 (VLSSQPTPSPSSKPARSRTDARRQ) is disordered. A compositionally biased stretch (low complexity) spans 175–186 (SSQPTPSPSSKP). The GPI-anchor amidated serine moiety is linked to residue Ser-335. Positions 336–354 (SSSLPTFLIVFLIAVNLLF) are cleaved as a propeptide — removed in mature form.

It belongs to the ephrin family. May undergo proteolysis by metalloprotease sup-17 to give rise to a soluble form.

It is found in the cell membrane. Functionally, regulates the formation or stabilization of cell-cell contacts at several stages of epithelial morphogenesis. In early embryonic development, involved in ventral closure of the epidermis. During male tail morphogenesis, regulates precursor cell sorting together with mab-20 and allows the formation of distinct sensory rays. Probably acts as a ligand for lad-2 to regulate axon guidance of several neurons including SDQL, SDQR, SMD and PLN neurons during neurogenesis. This chain is Ephrin-4 (efn-4), found in Caenorhabditis briggsae.